The chain runs to 266 residues: Phosphonates import ATP-binding protein PhnC (266 aa).

The ABC transporter domain maps to 2-246; the sequence is IEIKNVSKTY…KFAEIYGRPI (245 aa). 35 to 42 is a binding site for ATP; sequence GLSGAGKS.

It belongs to the ABC transporter superfamily. Phosphonates importer (TC 3.A.1.9.1) family. The complex is composed of two ATP-binding proteins (PhnC), two transmembrane proteins (PhnE) and a solute-binding protein (PhnD).

The protein resides in the cell membrane. The catalysed reaction is phosphonate(out) + ATP + H2O = phosphonate(in) + ADP + phosphate + H(+). Functionally, part of the ABC transporter complex PhnCDE involved in phosphonates import. Responsible for energy coupling to the transport system. The sequence is that of Phosphonates import ATP-binding protein PhnC from Shouchella clausii (strain KSM-K16) (Alkalihalobacillus clausii).